Here is a 356-residue protein sequence, read N- to C-terminus: Carbamoyl phosphate synthase small chain (356 aa).

The tract at residues 1 to 160 is CPSase; the sequence is MKGYLKLEDG…TKKPYRIAGI (160 aa). Ser45, Gly211, and Gly213 together coordinate L-glutamine. Positions 163–350 constitute a Glutamine amidotransferase type-1 domain; the sequence is KLAFIDLGTK…MDIVMVYKRR (188 aa). Cys238 (nucleophile) is an active-site residue. Residues Leu239, Gln242, Asn280, Gly282, and Tyr283 each coordinate L-glutamine. Catalysis depends on residues His323 and Glu325.

The protein belongs to the CarA family. As to quaternary structure, composed of two chains; the small (or glutamine) chain promotes the hydrolysis of glutamine to ammonia, which is used by the large (or ammonia) chain to synthesize carbamoyl phosphate. Tetramer of heterodimers (alpha,beta)4.

The catalysed reaction is hydrogencarbonate + L-glutamine + 2 ATP + H2O = carbamoyl phosphate + L-glutamate + 2 ADP + phosphate + 2 H(+). It carries out the reaction L-glutamine + H2O = L-glutamate + NH4(+). Its pathway is amino-acid biosynthesis; L-arginine biosynthesis; carbamoyl phosphate from bicarbonate: step 1/1. It participates in pyrimidine metabolism; UMP biosynthesis via de novo pathway; (S)-dihydroorotate from bicarbonate: step 1/3. Functionally, small subunit of the glutamine-dependent carbamoyl phosphate synthetase (CPSase). CPSase catalyzes the formation of carbamoyl phosphate from the ammonia moiety of glutamine, carbonate, and phosphate donated by ATP, constituting the first step of 2 biosynthetic pathways, one leading to arginine and/or urea and the other to pyrimidine nucleotides. The small subunit (glutamine amidotransferase) binds and cleaves glutamine to supply the large subunit with the substrate ammonia. The polypeptide is Carbamoyl phosphate synthase small chain (Caldanaerobacter subterraneus subsp. tengcongensis (strain DSM 15242 / JCM 11007 / NBRC 100824 / MB4) (Thermoanaerobacter tengcongensis)).